A 298-amino-acid polypeptide reads, in one-letter code: tRNA pseudouridine synthase B (298 aa).

Aspartate 42 functions as the Nucleophile in the catalytic mechanism.

Belongs to the pseudouridine synthase TruB family. Type 1 subfamily.

It catalyses the reaction uridine(55) in tRNA = pseudouridine(55) in tRNA. Functionally, responsible for synthesis of pseudouridine from uracil-55 in the psi GC loop of transfer RNAs. The polypeptide is tRNA pseudouridine synthase B (Mycobacterium tuberculosis (strain CDC 1551 / Oshkosh)).